Reading from the N-terminus, the 502-residue chain is Mannitol 2-dehydrogenase (502 aa).

37–48 (IVHIGVGGFHRA) serves as a coordination point for NAD(+).

Belongs to the mannitol dehydrogenase family. In terms of assembly, monomer.

The enzyme catalyses D-mannitol + NAD(+) = D-fructose + NADH + H(+). Catalyzes the NAD(H)-dependent interconversion of D-fructose and D-mannitol in the mannitol metabolic pathway. The chain is Mannitol 2-dehydrogenase from Aspergillus fumigatus (strain CBS 144.89 / FGSC A1163 / CEA10) (Neosartorya fumigata).